We begin with the raw amino-acid sequence, 351 residues long: AT-hook motif nuclear-localized protein 10 (351 aa).

Residues 1-151 are disordered; it reads MSGSETGLMA…RPPGSSSKRL (151 aa). Positions 23-37 are enriched in low complexity; that stretch reads HQQQQHSQAQPQQSQ. The span at 60–77 shows a compositional bias: polar residues; the sequence is SPPQQYQPNSAGENSVLN. The short motif at 97-105 is the Bipartite nuclear localization signal element; it reads KKRRGRPRK. 2 consecutive DNA-binding regions (a.T hook) follow at residues 97-109 and 138-149; these read KKRRGRPRKYGPD and KKRGRPPGSSSK. The PPC domain maps to 159–301; it reads TGIGFTPHVL…QMGLSSPVLP (143 aa). 2 stretches are compositionally biased toward polar residues: residues 310–325 and 334–351; these read MTPSSPQSRGTMSESS and IHQSTGGPYNNTINMPWK. The disordered stretch occupies residues 310 to 351; it reads MTPSSPQSRGTMSESSCGGGHGSPIHQSTGGPYNNTINMPWK.

The protein resides in the nucleus. Transcription factor that specifically binds AT-rich DNA sequences related to the nuclear matrix attachment regions (MARs). This Arabidopsis thaliana (Mouse-ear cress) protein is AT-hook motif nuclear-localized protein 10.